A 670-amino-acid polypeptide reads, in one-letter code: Transcriptional regulatory protein DOT6 (670 aa).

Positions 1 to 44 (MSISTSLNSASIHLSSMDTHPQLHSLTRQPHSSSTAMSKNEAQE) are enriched in polar residues. The segment at 1–78 (MSISTSLNSA…SKNPSSWDPQ (78 aa)) is disordered. Residues 45–74 (SSPSLPASSSSSTSASASASSKNSSKNPSS) show a composition bias toward low complexity. Residues 67-121 (NSSKNPSSWDPQDDLLLRHLKEVKKMGWKDISQYFPNRTPNACQFRWRRLKSGNL) form the HTH myb-type domain. The H-T-H motif DNA-binding region spans 94–117 (WKDISQYFPNRTPNACQFRWRRLK). The span at 226 to 242 (HHPHQHLHHHPHHKTLK) shows a compositional bias: basic residues. 4 disordered regions span residues 226 to 250 (HHPH…SHSF), 293 to 332 (TTPS…NTSR), 406 to 436 (HSSS…CNPT), and 483 to 659 (ADML…NSPL). Ser245 and Ser247 each carry phosphoserine. Composition is skewed to low complexity over residues 295–307 (PSSP…LLSS) and 316–332 (NWSR…NTSR). Positions 425–436 (SGHSMKSSCNPT) are enriched in polar residues. The residue at position 487 (Ser487) is a Phosphoserine. Thr489 bears the Phosphothreonine mark. Position 491 is a phosphoserine (Ser491). A compositionally biased stretch (basic and acidic residues) spans 512–522 (DDDKGSDKEDV). 2 stretches are compositionally biased toward low complexity: residues 544-561 (SSNK…SSKD) and 587-598 (TITSDTSSSAAT). The span at 599–608 (MNRTPNSKNP) shows a compositional bias: polar residues. The segment covering 622 to 659 (ITPRPKPSSTTTSITTETTNNMINHSSSTTTTTNNSPL) has biased composition (low complexity).

This sequence belongs to the DOT6 family. As to quaternary structure, component of the RPD3C(L) complex composed of at least ASH1, CTI6, DEP1, DOT6, PHO23, RPD3, RXT2, RXT3, SAP30, SDS3, SIN3, TOD6; UME1 and UME6.

It localises to the nucleus. In terms of biological role, component of the RPD3 histone deacetylase complex RPD3C(L) responsible for the deacetylation of lysine residues on the N-terminal part of the core histones (H2A, H2B, H3 and H4). Histone deacetylation gives a tag for epigenetic repression and plays an important role in transcriptional regulation, cell cycle progression and developmental events. DOT6 binds to sequences containing the core CGATG, which resembles the PAC (Polymerase A and C) motif. The sequence is that of Transcriptional regulatory protein DOT6 (DOT6) from Saccharomyces cerevisiae (strain ATCC 204508 / S288c) (Baker's yeast).